A 370-amino-acid polypeptide reads, in one-letter code: Putative F-box protein At3g10430 (370 aa).

Positions 1 to 47 constitute an F-box domain; that stretch reads MGSSLPFDLILEILQRTPAESLLRFKSTCKKWYELISNDKRFMYKHL.

The sequence is that of Putative F-box protein At3g10430 from Arabidopsis thaliana (Mouse-ear cress).